A 456-amino-acid polypeptide reads, in one-letter code: Serine--tRNA ligase (456 aa).

252 to 254 serves as a coordination point for L-serine; that stretch reads TSE. Residues 283-285 and Val299 contribute to the ATP site; that span reads RKE. An L-serine-binding site is contributed by Glu306. 370 to 373 lines the ATP pocket; sequence ELVS. Residue Thr404 coordinates L-serine.

Belongs to the class-II aminoacyl-tRNA synthetase family. Type-1 seryl-tRNA synthetase subfamily. As to quaternary structure, homodimer. The tRNA molecule binds across the dimer.

It localises to the cytoplasm. It catalyses the reaction tRNA(Ser) + L-serine + ATP = L-seryl-tRNA(Ser) + AMP + diphosphate + H(+). The catalysed reaction is tRNA(Sec) + L-serine + ATP = L-seryl-tRNA(Sec) + AMP + diphosphate + H(+). It functions in the pathway aminoacyl-tRNA biosynthesis; selenocysteinyl-tRNA(Sec) biosynthesis; L-seryl-tRNA(Sec) from L-serine and tRNA(Sec): step 1/1. In terms of biological role, catalyzes the attachment of serine to tRNA(Ser). Is also able to aminoacylate tRNA(Sec) with serine, to form the misacylated tRNA L-seryl-tRNA(Sec), which will be further converted into selenocysteinyl-tRNA(Sec). In Korarchaeum cryptofilum (strain OPF8), this protein is Serine--tRNA ligase.